Reading from the N-terminus, the 452-residue chain is 3-phosphoshikimate 1-carboxyvinyltransferase (452 aa).

Positions 24, 25, and 29 each coordinate 3-phosphoshikimate. Lysine 24 is a binding site for phosphoenolpyruvate. 2 residues coordinate phosphoenolpyruvate: glycine 95 and arginine 123. 3-phosphoshikimate-binding residues include serine 167, glutamine 169, aspartate 319, and lysine 346. Glutamine 169 is a binding site for phosphoenolpyruvate. Aspartate 319 functions as the Proton acceptor in the catalytic mechanism. Residues arginine 350 and arginine 394 each coordinate phosphoenolpyruvate.

It belongs to the EPSP synthase family. Monomer.

The protein resides in the cytoplasm. It catalyses the reaction 3-phosphoshikimate + phosphoenolpyruvate = 5-O-(1-carboxyvinyl)-3-phosphoshikimate + phosphate. Its pathway is metabolic intermediate biosynthesis; chorismate biosynthesis; chorismate from D-erythrose 4-phosphate and phosphoenolpyruvate: step 6/7. Catalyzes the transfer of the enolpyruvyl moiety of phosphoenolpyruvate (PEP) to the 5-hydroxyl of shikimate-3-phosphate (S3P) to produce enolpyruvyl shikimate-3-phosphate and inorganic phosphate. The protein is 3-phosphoshikimate 1-carboxyvinyltransferase of Phenylobacterium zucineum (strain HLK1).